The sequence spans 396 residues: Ornithine aminotransferase (396 aa).

An N6-(pyridoxal phosphate)lysine modification is found at K255.

Belongs to the class-III pyridoxal-phosphate-dependent aminotransferase family. OAT subfamily. It depends on pyridoxal 5'-phosphate as a cofactor.

The protein localises to the cytoplasm. It catalyses the reaction a 2-oxocarboxylate + L-ornithine = L-glutamate 5-semialdehyde + an L-alpha-amino acid. Its pathway is amino-acid biosynthesis; L-proline biosynthesis; L-glutamate 5-semialdehyde from L-ornithine: step 1/1. Functionally, catalyzes the interconversion of ornithine to glutamate semialdehyde. This chain is Ornithine aminotransferase, found in Bacillus cereus (strain 03BB102).